The following is a 307-amino-acid chain: G-protein coupled receptor 35 (307 aa).

Over 1–18 the chain is Extracellular; sequence MNSTTCNSTLTWPASVNN. 2 N-linked (GlcNAc...) asparagine glycosylation sites follow: Asn-2 and Asn-7. A helical transmembrane segment spans residues 19-39; that stretch reads FFIIYSALLLVLGLLLNSVAL. The Cytoplasmic segment spans residues 40 to 53; sequence WVFCYRMHQWTETR. A helical transmembrane segment spans residues 54–74; sequence IYMTNLAVADLCLLCSLPFVL. Topologically, residues 75–88 are extracellular; it reads YSLKYSSSDTPVCQ. Cys-87 and Cys-160 are disulfide-bonded. Residues 89-110 traverse the membrane as a helical segment; the sequence is LSQGIYLANRYMSISLVTAIAV. Residues 111–129 lie on the Cytoplasmic side of the membrane; the sequence is DRYVAVRHPLRARELRSPR. A helical transmembrane segment spans residues 130–150; sequence QAAAVCVALWVIVVTSLVVRW. Residues 151 to 176 are Extracellular-facing; it reads RLGMQEGGFCFSSQTRRNFSTTAFSL. The helical transmembrane segment at 177-197 threads the bilayer; sequence LGFYLPLAIVVFCSLQVVTVL. At 198–217 the chain is on the cytoplasmic side; it reads SRRPAADVGQAEATQKATHM. Residues 218-238 form a helical membrane-spanning segment; that stretch reads VWANLAVFVICFLPLHVVLTV. The Extracellular portion of the chain corresponds to 239 to 257; it reads QVSLNLNTCAARDTFSRAL. The chain crosses the membrane as a helical span at residues 258–278; the sequence is SITGKLSDTNCCLDAICYYYM. At 279-307 the chain is on the cytoplasmic side; sequence AREFQEASKPATSSNTPHKSQDSQILSLT. Ser-286, Ser-292, Ser-298, and Ser-301 each carry phosphoserine. Residues 288–307 are disordered; it reads PATSSNTPHKSQDSQILSLT.

Belongs to the G-protein coupled receptor 1 family. Multiply phosphorylated in clusters of serines and threonines in the C-terminal tail. Phosphorylation of Ser-298 and Ser-301 is mediated by GRK5 and/or GRK6. Predominantly expressed in immune and gastrointestinal tissues. Strongly GPR35 expressed in colonic macrophages.

It is found in the cell membrane. G-protein coupled receptor that binds to several ligands including the tryptophan metabolite kynurenic acid (KYNA), lysophosphatidic acid (LPA) or 5-hydroxyindoleacetic acid (5-HIAA) with high affinity, leading to rapid and transient activation of numerous intracellular signaling pathways. Plays a role in neutrophil recruitment to sites of inflammation and bacterial clearance through the major serotonin metabolite 5-HIAA that acts as a physiological ligand. Stimulates lipid metabolism, thermogenic, and anti-inflammatory gene expression in adipose tissue once activated by kynurenic acid. In macrophages, activation by lysophosphatidic acid promotes GPR35-induced signaling with a distinct transcriptional profile characterized by TNF production associated with ERK and NF-kappa-B activation. In turn, induces chemotaxis of macrophages. The polypeptide is G-protein coupled receptor 35 (Gpr35) (Mus musculus (Mouse)).